The following is a 177-amino-acid chain: MEHRGVTVWFTGLSGAGKTTISHALAERLKAAGCKLEILDGDIVRTNLTKGLGFSKEDRDENIRRIGFVSHLLTRNGVIVFVSAISPYREIREEVRQRIGDFVEIFVNAPLEECERRDVKGLYQRARAGEIKGFTGIDDPYEAPTNPEVECRTDLEELEESIEKVMKKLTELGYITP.

Position 12-19 (Gly-12–Thr-19) interacts with ATP. Ser-86 acts as the Phosphoserine intermediate in catalysis.

The protein belongs to the APS kinase family.

It carries out the reaction adenosine 5'-phosphosulfate + ATP = 3'-phosphoadenylyl sulfate + ADP + H(+). Its pathway is sulfur metabolism; hydrogen sulfide biosynthesis; sulfite from sulfate: step 2/3. Its function is as follows. Catalyzes the synthesis of activated sulfate. This chain is Adenylyl-sulfate kinase, found in Picosynechococcus sp. (strain ATCC 27264 / PCC 7002 / PR-6) (Agmenellum quadruplicatum).